The sequence spans 302 residues: Homoserine O-acetyltransferase (302 aa).

C142 functions as the Acyl-thioester intermediate in the catalytic mechanism. 2 residues coordinate substrate: K163 and S192. H235 acts as the Proton acceptor in catalysis. E237 is a catalytic residue. R249 provides a ligand contact to substrate.

Belongs to the MetA family.

The protein resides in the cytoplasm. The catalysed reaction is L-homoserine + acetyl-CoA = O-acetyl-L-homoserine + CoA. It functions in the pathway amino-acid biosynthesis; L-methionine biosynthesis via de novo pathway; O-acetyl-L-homoserine from L-homoserine: step 1/1. Transfers an acetyl group from acetyl-CoA to L-homoserine, forming acetyl-L-homoserine. The chain is Homoserine O-acetyltransferase from Clostridium novyi (strain NT).